Consider the following 1178-residue polypeptide: Pyruvate carboxylase, mitochondrial (1178 aa).

A mitochondrion-targeting transit peptide spans 1–20 (MLKFQTVRGGLRLLGVRRSS). An N6-acetyllysine mark is found at Lys35 and Lys39. Residues 36–486 (PIKKVMVANR…DTQFIDENPE (451 aa)) enclose the Biotin carboxylation domain. At Lys79 the chain carries N6-acetyllysine; alternate. Lys79 carries the post-translational modification N6-succinyllysine; alternate. Residues Lys148 and Lys152 each carry the N6-acetyllysine modification. Residues Lys152 and Glu236 each contribute to the ATP site. Positions 156 to 353 (RAIAIAAGVP…LVHAQIHVSE (198 aa)) constitute an ATP-grasp domain. Residue Lys241 is modified to N6-acetyllysine. His271 serves as a coordination point for ATP. N6-acetyllysine is present on residues Lys297, Lys316, and Lys319. Arg328 is a catalytic residue. Position 434 is an N6-acetyllysine (Lys434). Lys442 is subject to N6-succinyllysine. The 270-residue stretch at 563–832 (LLLMDTTFRD…DTEVPLERVF (270 aa)) folds into the Pyruvate carboxyltransferase domain. Position 571–575 (571–575 (RDAHQ)) interacts with substrate. Mn(2+) is bound at residue Asp572. Lys589 carries the N6-acetyllysine modification. Position 644 (Arg644) interacts with substrate. 2 positions are modified to N6-acetyllysine: Lys661 and Lys717. Lys741 contacts Mn(2+). Position 741 is an N6-carboxylysine (Lys741). Lys748 carries the N6-acetyllysine modification. Mn(2+)-binding residues include His771 and His773. Lys892 is modified (N6-acetyllysine). Thr908 contacts substrate. Residue Lys969 is modified to N6-acetyllysine. Lys988 bears the N6-acetyllysine; alternate mark. Lys988 carries the N6-succinyllysine; alternate modification. At Lys992 the chain carries N6-acetyllysine. Position 1003 is a phosphothreonine (Thr1003). N6-acetyllysine is present on residues Lys1061, Lys1090, and Lys1124. The region spanning 1109–1178 (KGQIGAPMPG…EGDDLILEIE (70 aa)) is the Biotinyl-binding domain. At Lys1144 the chain carries N6-biotinyllysine.

Homotetramer. Interacts (via the biotin carboxylation domain) with SIRT4. Biotin is required as a cofactor. It depends on Mn(2+) as a cofactor. In terms of processing, acetylation of Lys-748 might play a role in catalytic activity regulation.

Its subcellular location is the mitochondrion matrix. The catalysed reaction is hydrogencarbonate + pyruvate + ATP = oxaloacetate + ADP + phosphate + H(+). Its pathway is carbohydrate biosynthesis; gluconeogenesis. Functionally, pyruvate carboxylase catalyzes a 2-step reaction, involving the ATP-dependent carboxylation of the covalently attached biotin in the first step and the transfer of the carboxyl group to pyruvate in the second. Catalyzes in a tissue specific manner, the initial reactions of glucose (liver, kidney) and lipid (adipose tissue, liver, brain) synthesis from pyruvate. The sequence is that of Pyruvate carboxylase, mitochondrial (Pc) from Rattus norvegicus (Rat).